A 207-amino-acid chain; its full sequence is Small ribosomal subunit protein uS4 (207 aa).

The interval 30–53 (DKSKFDTKPGQHGRTSGQRTSDFG) is disordered. Residues 42–52 (GRTSGQRTSDF) show a composition bias toward polar residues. Positions 97–157 (SRLDNVVYRM…EKSKKQARIV (61 aa)) constitute an S4 RNA-binding domain.

This sequence belongs to the universal ribosomal protein uS4 family. In terms of assembly, part of the 30S ribosomal subunit. Contacts protein S5. The interaction surface between S4 and S5 is involved in control of translational fidelity.

In terms of biological role, one of the primary rRNA binding proteins, it binds directly to 16S rRNA where it nucleates assembly of the body of the 30S subunit. Its function is as follows. With S5 and S12 plays an important role in translational accuracy. The polypeptide is Small ribosomal subunit protein uS4 (Delftia acidovorans (strain DSM 14801 / SPH-1)).